A 3419-amino-acid polypeptide reads, in one-letter code: Utrophin (3419 aa).

The tract at residues 1 to 246 is actin-binding; it reads MAKYGHLEAS…LPDKKSIIMY (246 aa). A Phosphotyrosine modification is found at tyrosine 4. Serine 10 carries the phosphoserine modification. Calponin-homology (CH) domains lie at 31–135 and 150–255; these read DVQK…LHWQ and TNSE…EVLP. An interaction with SYNM region spans residues 268–905; it reads TLPRKYKKEC…YQQQLENELK (638 aa). Serine 295 is subject to Phosphoserine. 17 Spectrin repeats span residues 312-416, 421-525, 532-636, 690-795, 801-901, 910-1012, 1019-1121, 1128-1229, 1236-1333, 1335-1436, 1438-1540, 1547-1648, 1653-1747, 1748-1840, 1841-1958, 1969-2070, and 2077-2176; these read DSYQ…SRLH, ELQK…NRLQ, QELL…NQVT, KKFD…RKIQ, NAYF…QQLE, PAYL…RSLE, RDFK…SRLS, MNLK…HTLE, VELL…ISLE, QLQV…LFQK, ANFE…QDLE, RKLK…NTLL, QLEV…INSA, QMLI…KIKA, IPQR…SDRR, KQFH…PRLK, and SGYR…KTRT. The interaction with SYNM stretch occupies residues 1336–1761; the sequence is LQVLRETDHM…GQDPAGTVEA (426 aa). A Phosphoserine modification is found at serine 1998. Serine 2201 carries the post-translational modification Phosphoserine. 5 Spectrin repeats span residues 2216–2319, 2336–2426, 2433–2542, 2549–2674, and 2681–2783; these read ADLD…QQLE, EELM…SALE, QTSR…AHLE, NRLL…KQVG, and RDLQ…KQLQ. Residues 2616-2640 form a disordered region; the sequence is DQPIEAPEEPRRNPQSKTELTPEER. The interval 2785 to 3152 is interaction with SYNM; the sequence is AHRDFGPSSQ…TVLEGDNLET (368 aa). The WW domain maps to 2799–2832; that stretch reads TSVQLPWQRSISHNKVPYYINHQTQTTCWDHPKM. Residues 3052 to 3108 form a ZZ-type; degenerate zinc finger; the sequence is KHQAKCNICKECPIVGFRYRSLKHFNYDVCQSCFFSGRTAKGHKLHYPMVEYCIPTT. The Zn(2+) site is built by cysteine 3057, cysteine 3060, cysteine 3081, and cysteine 3084. Disordered stretches follow at residues 3277–3296 and 3344–3395; these read RRGLPLGSPPDSIVSPYHTS and DSDS…TDLT. A Phosphoserine modification is found at serine 3284.

As to quaternary structure, homodimer. Interacts with the syntrophins SNTA1; SNTB1 and SNTB2. Interacts with SYNM. Interacts (via its WWW and ZZ domains) with DAG1 (via the PPXY motif of betaDAG1); the interaction is inhibited by the tyrosine phosphorylation of the PPXY motif of DAG1. Interacts with DTNB. Interacts with PGM5.

It is found in the postsynaptic cell membrane. The protein resides in the cytoplasm. It localises to the cytoskeleton. In terms of biological role, may play a role in anchoring the cytoskeleton to the plasma membrane. This chain is Utrophin, found in Rattus norvegicus (Rat).